The primary structure comprises 61 residues: Conotoxin TeAr154 (61 aa).

A signal peptide spans Met1 to Ser19. Residues Val20–Leu47 constitute a propeptide that is removed on maturation. Glu57 is subject to 4-carboxyglutamate.

Contains 2 disulfide bonds that can be either 'C1-C3, C2-C4' or 'C1-C4, C2-C3', since these disulfide connectivities have been observed for conotoxins with cysteine framework V (for examples, see AC P0DQQ7 and AC P81755). Post-translationally, contains 2 disulfide bonds. As to expression, expressed by the venom duct.

The protein localises to the secreted. This Conus textile (Cloth-of-gold cone) protein is Conotoxin TeAr154.